Reading from the N-terminus, the 664-residue chain is Frizzled-3 (664 aa).

The N-terminal stretch at 1–16 is a signal peptide; the sequence is MAAYLISFIWVSVILA. The Extracellular segment spans residues 17-204; sequence QKSMGHSLFA…REELSFARYF (188 aa). The region spanning 22–135 is the FZ domain; that stretch reads HSLFACEPIT…CSRFPDCDEP (114 aa). 5 disulfide bridges follow: Cys27–Cys88, Cys35–Cys81, Cys72–Cys109, Cys98–Cys132, and Cys102–Cys126. N-linked (GlcNAc...) asparagine glycosylation is present at Asn41. Residues 205-225 traverse the membrane as a helical segment; it reads IGVISIVCLSATLFTFLTFLI. Topologically, residues 226-236 are cytoplasmic; that stretch reads DVTRFRYPERP. The chain crosses the membrane as a helical span at residues 237–257; it reads IIFYAVCYMMVSLIFFIGFLL. The Extracellular portion of the chain corresponds to 258–287; sequence EDKVACNGANPSQYKASTVTQGSHNKACTM. The chain crosses the membrane as a helical span at residues 288–308; the sequence is LFMVLYFFTMAGSVWWVILTI. The Cytoplasmic portion of the chain corresponds to 309–327; sequence TWFLAAVPKWGSEAIEKKA. A helical membrane pass occupies residues 328-348; sequence LLFHASAWGIPGTLTIILLAM. Topologically, residues 349-373 are extracellular; that stretch reads NKIEGDNISGVCFVGLYDVHALRYF. An N-linked (GlcNAc...) asparagine glycan is attached at Asn355. The helical transmembrane segment at 374–394 threads the bilayer; it reads VLAPLCLDVVVGVSLLLAGII. Topologically, residues 395–419 are cytoplasmic; sequence SLNRVRIEIPLEKENQDKLVKFMIR. The helical transmembrane segment at 420 to 440 threads the bilayer; it reads IGVFSILYLVPLLVVIGCYFY. Residues 441–476 are Extracellular-facing; sequence EQAYRGVWETTWVQERCREYHIPCPYKVTQTSRPDL. A helical transmembrane segment spans residues 477 to 497; the sequence is ILFLMKYLMLLVVGIPSVFWV. The Cytoplasmic portion of the chain corresponds to 498–664; that stretch reads GSKKTCFEWA…RVIEADATSA (167 aa). The short motif at 501–506 is the Lys-Thr-X-X-X-Trp motif, mediates interaction with the PDZ domain of Dvl family members element; sequence KTCFEW. The disordered stretch occupies residues 537–664; that stretch reads RDPNTPIVRK…RVIEADATSA (128 aa). Polar residues-rich tracts occupy residues 549–564 and 573–585; these read GTSTQGTSTHASSTQL and KAGSVQSKVSSYH.

Belongs to the G-protein coupled receptor Fz/Smo family. Expression restricted to the early nervous system.

Its subcellular location is the membrane. It is found in the cell membrane. The protein localises to the cell surface. It localises to the apical cell membrane. In terms of biological role, receptor for Wnt proteins. Most of frizzled receptors are coupled to the beta-catenin canonical signaling pathway, which leads to the activation of disheveled proteins, inhibition of GSK-3 kinase, nuclear accumulation of beta-catenin and activation of Wnt target genes. A second signaling pathway involving PKC and calcium fluxes has been seen for some family members, but it is not yet clear if it represents a distinct pathway or if it can be integrated in the canonical pathway, as PKC seems to be required for Wnt-mediated inactivation of GSK-3 kinase. Both pathways seem to involve interactions with G-proteins. Activated by Wnt8. Involved in transduction and intercellular transmission of polarity information during tissue morphogenesis and/or in differentiated tissues. Plays a role in controlling early axon growth and guidance processes necessary for the formation of a subset of central and peripheral major fiber tracts. Involved in the migration of cranial neural crest cells. May also be implicated in the transmission of sensory information from the trunk and limbs to the brain. Controls commissural sensory axons guidance after midline crossing along the anterior-posterior axis in the developing spinal cord in a Wnt-dependent signaling pathway. Together with FZD6, is involved in the neural tube closure and plays a role in the regulation of the establishment of planar cell polarity (PCP). Promotes neurogenesis by maintaining sympathetic neuroblasts within the cell cycle in a beta-catenin-dependent manner. This is Frizzled-3 (fzd3) from Xenopus laevis (African clawed frog).